The primary structure comprises 217 residues: Chloramphenicol acetyltransferase (217 aa).

The active-site Proton acceptor is His-193.

The protein belongs to the chloramphenicol acetyltransferase family. Homotrimer.

It catalyses the reaction chloramphenicol + acetyl-CoA = chloramphenicol 3-acetate + CoA. Functionally, this enzyme is an effector of chloramphenicol resistance in bacteria. The sequence is that of Chloramphenicol acetyltransferase (cat) from Proteus mirabilis.